Consider the following 494-residue polypeptide: Endoglucanase 1 (494 aa).

The N-terminal stretch at 1 to 25 is a signal peptide; the sequence is MDCSSPLSLFHLLLVCTVMVKCCSA. Residue D82 is the Nucleophile of the active site. N254 and N359 each carry an N-linked (GlcNAc...) asparagine glycan. Active-site residues include H411, D462, and E471.

It belongs to the glycosyl hydrolase 9 (cellulase E) family.

It carries out the reaction Endohydrolysis of (1-&gt;4)-beta-D-glucosidic linkages in cellulose, lichenin and cereal beta-D-glucans.. Its function is as follows. Involved in ripening fruit process. This chain is Endoglucanase 1 (CEL1), found in Persea americana (Avocado).